The primary structure comprises 78 residues: ATP synthase subunit a (78 aa).

The next 3 membrane-spanning stretches (helical) occupy residues 13–33, 35–55, and 57–77; these read LFGNVYAKEMLMILLVGLGTS, FLGAFGAFLPLIVWQAFGMFI, and SLQAFIFAMLAMVYMAHKVEA.

It belongs to the ATPase A chain family. In terms of assembly, F-type ATPases have 2 components, CF(1) - the catalytic core - and CF(0) - the membrane proton channel. CF(1) has five subunits: alpha(3), beta(3), gamma(1), delta(1), epsilon(1). CF(0) has three main subunits: a(1), b(2) and c(9-12). The alpha and beta chains form an alternating ring which encloses part of the gamma chain. CF(1) is attached to CF(0) by a central stalk formed by the gamma and epsilon chains, while a peripheral stalk is formed by the delta and b chains.

The protein resides in the cell membrane. In terms of biological role, key component of the proton channel; it plays a direct role in the translocation of protons across the membrane. The polypeptide is ATP synthase subunit a (atpB) (Alkalihalobacillus alcalophilus (Bacillus alcalophilus)).